Reading from the N-terminus, the 304-residue chain is Acetylglutamate kinase (304 aa).

Substrate-binding positions include Gly69–Gly70, Arg91, and Asn202.

This sequence belongs to the acetylglutamate kinase family. ArgB subfamily.

Its subcellular location is the cytoplasm. It carries out the reaction N-acetyl-L-glutamate + ATP = N-acetyl-L-glutamyl 5-phosphate + ADP. It participates in amino-acid biosynthesis; L-arginine biosynthesis; N(2)-acetyl-L-ornithine from L-glutamate: step 2/4. Catalyzes the ATP-dependent phosphorylation of N-acetyl-L-glutamate. In Caulobacter sp. (strain K31), this protein is Acetylglutamate kinase.